The following is a 176-amino-acid chain: Peptide deformylase (176 aa).

Fe cation contacts are provided by C94 and H136. The active site involves E137. H140 is a binding site for Fe cation.

This sequence belongs to the polypeptide deformylase family. Fe(2+) serves as cofactor.

The enzyme catalyses N-terminal N-formyl-L-methionyl-[peptide] + H2O = N-terminal L-methionyl-[peptide] + formate. In terms of biological role, removes the formyl group from the N-terminal Met of newly synthesized proteins. Requires at least a dipeptide for an efficient rate of reaction. N-terminal L-methionine is a prerequisite for activity but the enzyme has broad specificity at other positions. This is Peptide deformylase from Bartonella henselae (strain ATCC 49882 / DSM 28221 / CCUG 30454 / Houston 1) (Rochalimaea henselae).